Here is a 449-residue protein sequence, read N- to C-terminus: Elongation factor 1-alpha 1 (449 aa).

Positions 5–230 constitute a tr-type G domain; the sequence is KVHMNLVVVG…DMLEPPVRPS (226 aa). A G1 region spans residues 14–21; it reads GHVDAGKS. 14–21 contributes to the GTP binding site; that stretch reads GHVDAGKS. A G2 region spans residues 70–74; that stretch reads GITID. Residues 91–94 are G3; that stretch reads DAPG. GTP-binding positions include 91 to 95 and 153 to 156; these read DAPGH and NKMD. A G4 region spans residues 153-156; it reads NKMD. The segment at 194-196 is G5; the sequence is SGW. The residue at position 362 (glutamate 362) is a 5-glutamyl glycerylphosphorylethanolamine.

This sequence belongs to the TRAFAC class translation factor GTPase superfamily. Classic translation factor GTPase family. EF-Tu/EF-1A subfamily. Post-translationally, phosphatidylethanolamine (PE) is a direct precursor of the ethanolamine-phosphoglycerol (EPG) moiety.

It is found in the cytoplasm. This protein promotes the GTP-dependent binding of aminoacyl-tRNA to the A-site of ribosomes during protein biosynthesis. The sequence is that of Elongation factor 1-alpha 1 (TEF1) from Trypanosoma brucei brucei (strain 927/4 GUTat10.1).